The following is a 281-amino-acid chain: Inositol diphosphatase SIW14 (281 aa).

Residues M1–I20 are disordered. Positions K7 to I20 are enriched in basic and acidic residues. S94 bears the Phosphoserine mark. In terms of domain architecture, Tyrosine-protein phosphatase spans N121–A271. N189, I190, and H193 together coordinate 1D-myo-inositol hexakisphosphate. Residue C214 is the Phosphocysteine intermediate of the active site.

The protein belongs to the protein-tyrosine phosphatase family. Atypical dual-specificity phosphatase Siw14-like subfamily. Monomer.

The protein resides in the cytoplasm. It carries out the reaction 5-diphospho-1D-myo-inositol 1,2,3,4,6-pentakisphosphate + H2O = 1D-myo-inositol hexakisphosphate + phosphate + H(+). The catalysed reaction is 5-diphospho-1D-myo-inositol 1,3,4,6-tetrakisphosphate + H2O = 1D-myo-inositol 1,3,4,5,6-pentakisphosphate + phosphate + H(+). It catalyses the reaction 3,5-bis(diphospho)-1D-myo-inositol 1,2,4,6-tetrakisphosphate + H2O = 3-diphospho-1D-myo-inositol 1,2,4,5,6-pentakisphosphate + phosphate + 2 H(+). The enzyme catalyses 1,5-bis(diphospho)-1D-myo-inositol 2,3,4,6-tetrakisphosphate + H2O = 1-diphospho-1D-myo-inositol 2,3,4,5,6-pentakisphosphate + phosphate + 2 H(+). It carries out the reaction 6-diphospho-1D-myo-inositol pentakisphosphate + H2O = 1D-myo-inositol hexakisphosphate + phosphate + H(+). In terms of biological role, selectively cleaves the beta-phosphate at the 5-position of soluble inositol pyrophosphates. Converts 5-diphosphoinositol tetrakisphosphate (5-PP-InsP(4)) into inositol pentakisphosphate (InsP(5)), 5-diphosphoinositol pentakisphosphate (5-PP-IP(5) or 5-InsP(7)) into inositol hexakisphosphate (IP(6) or InsP(6)), and 1,5-bisdiphosphoinositol tetrakisphosphate (1,5-PP-IP(5) or InsP(8)) into 1-diphosphoinositol pentakisphosphate (1-PP-IP(5) or 1-InsP(7)). Also has activity on 1,5-bis-diphosphoinositol 2,3,4,6-tetrakisphosphate (1,5-InsP(8)) and 3,5-InsP(8). Modulates inositol pyrophosphate metabolism that may have an influence in stress response. Plays a role in actin filament organization and endocytosis. Functions as a prion suppressing factor possibly due to its phosphatase activity against inositol pyrophosphates, which are signal transduction molecules involved in prion propagation. This is Inositol diphosphatase SIW14 (SIW14) from Saccharomyces cerevisiae (strain ATCC 204508 / S288c) (Baker's yeast).